Consider the following 520-residue polypeptide: DNA-(apurinic or apyrimidinic site) endonuclease 2 (520 aa).

Glutamate 59 contributes to the Mg(2+) binding site. The active site involves tyrosine 181. Mg(2+) contacts are provided by aspartate 222, asparagine 224, and aspartate 353. Aspartate 222 serves as the catalytic Proton donor/acceptor. The Zn(2+) site is built by cysteine 476, histidine 478, cysteine 500, and cysteine 514. A GRF-type zinc finger spans residues 476–520 (CRHGEESMLKTSKTSANPGRKFWICKRSRGDSNNTESSCGFFQWV).

This sequence belongs to the DNA repair enzymes AP/ExoA family. Mg(2+) serves as cofactor. The cofactor is Mn(2+).

Its subcellular location is the nucleus. The catalysed reaction is Exonucleolytic cleavage in the 3'- to 5'-direction to yield nucleoside 5'-phosphates.. Functionally, DNA repair enzyme that cleaves apurinic/apyrimidinic (AP) sites and removes 3'-blocking groups present at single strand breaks of damaged DNA. In Saccharomyces cerevisiae (strain ATCC 204508 / S288c) (Baker's yeast), this protein is DNA-(apurinic or apyrimidinic site) endonuclease 2 (APN2).